We begin with the raw amino-acid sequence, 322 residues long: Ornithine carbamoyltransferase (322 aa).

Carbamoyl phosphate is bound by residues serine 67–threonine 70, glutamine 94, arginine 118, and histidine 145–glutamine 148. L-ornithine-binding positions include asparagine 176, aspartate 240, and serine 244–methionine 245. Carbamoyl phosphate contacts are provided by residues cysteine 280 to leucine 281 and arginine 308.

The protein belongs to the aspartate/ornithine carbamoyltransferase superfamily. OTCase family.

It localises to the cytoplasm. It carries out the reaction carbamoyl phosphate + L-ornithine = L-citrulline + phosphate + H(+). The protein operates within amino-acid biosynthesis; L-arginine biosynthesis; L-arginine from L-ornithine and carbamoyl phosphate: step 1/3. Its function is as follows. Reversibly catalyzes the transfer of the carbamoyl group from carbamoyl phosphate (CP) to the N(epsilon) atom of ornithine (ORN) to produce L-citrulline. The protein is Ornithine carbamoyltransferase of Oceanobacillus iheyensis (strain DSM 14371 / CIP 107618 / JCM 11309 / KCTC 3954 / HTE831).